The chain runs to 1183 residues: MAGKFVQYGRHRKRRNYARISEVLELPNLIEIQTKSYDWFLKEGLLEMFRDISPIEDFTGNLSLEFVDYRLGEPKYDLEESKNRDATYAAPLRVKVRLINKETGEVKDQEVFMGDFPLMTDTGTFVINGAERVIVSQLVRSPSVYFNEKIDKNGRENYDATVIPNRGAWLEFETDAKDIVYVRIDRTRKLPLTVLLRALGYSTDQSIIDLLGDNEYLRNTLEKDSTENTEQALLEIYERLRPGEPPTVENAKSLLYSRFFDPKRYDLASVGRYKMNKKLHLKHRLFNQKLAEPIVNSDTGEIVAEEGTVLDRRKLDEIMDVLESNANIEVDELDDSIVNEPVEIQSIKVYVPNDEEGRTTTVIGNAFPDSEVKCITPADIVASMSYFFNLLHGIGQTDDIDHLGNRRLRSVGELLQNQFRIGLSRMERVVRERMSIQDTDSITPQQLINIRPVIASIKEFFGSSQLSQFMDQANPLAELTHKRRLSALGPGGLTRERAQMEVRDVHYSHYGRMCPIETPEGPNIGLINSLSSYARVNEFGFIETPYRKVDLETNTVTDQIDYLTADEEDSYVVAQANSRLDDEGHFISEEVVCRFRGNNTMMDRDKMDYMDVSPKQVVSAATACIPFLENDDSNRALMGANMQRQAVPLMNPESPFVGTGMEHATARDSGAAVINKHFGRVEHVESNEIKVRRIIEEDGQQYDGELDTYRLAKFKRSNSGTCYNQRPIVKDGDIVSQGEILADGPSMELGEMALGRNVVVGFMTWDGYNYEDAVIMSERLVKDDVYTSIHIEEYESEARDTKLGPEEITRDIPNVAESALKNLDERGIVYVGAEVKDGDILVGKVTPKGVTELTAEERLLHAIFGEKAREVRDTSLRVPHGAGGIVLDVKVFNREDGDDSLSPGVNQLVRVYIVQKRKIHVGDKMCGRHGNKGVISKIVPEEDMPYLPDGTPIDIMLNPLGVPSRMNIGQVLELHLGMAAKNLGIHVASPVFDGANDDDVWSTIEEAGMARDGKTVLYDGRTGEPFDNRISVGVMYMLKLAHMVDDKLHARSTGPYSLVTQQPLGGKAQFGGQRFGEMEVWALEAYGAAYTLQEILTYKSDDTVGRVKTYEAIVKGENISKPSVPESFRVLMKELQSLGLDVKVMDEDDKEIEMADVDEDDVNEHKVNIQQSSIPESQKETTD.

Residues 1155–1183 (ADVDEDDVNEHKVNIQQSSIPESQKETTD) form a disordered region.

Belongs to the RNA polymerase beta chain family. In terms of assembly, the RNAP catalytic core consists of 2 alpha, 1 beta, 1 beta' and 1 omega subunit. When a sigma factor is associated with the core the holoenzyme is formed, which can initiate transcription.

It carries out the reaction RNA(n) + a ribonucleoside 5'-triphosphate = RNA(n+1) + diphosphate. Functionally, DNA-dependent RNA polymerase catalyzes the transcription of DNA into RNA using the four ribonucleoside triphosphates as substrates. In Staphylococcus carnosus (strain TM300), this protein is DNA-directed RNA polymerase subunit beta.